We begin with the raw amino-acid sequence, 126 residues long: Small ribosomal subunit protein uS13 (126 aa).

Positions 99–126 (LRGQSTKNNARTRKGKKKTVANKKKATK) are disordered. Basic residues predominate over residues 108-126 (ARTRKGKKKTVANKKKATK).

Belongs to the universal ribosomal protein uS13 family. In terms of assembly, part of the 30S ribosomal subunit. Forms a loose heterodimer with protein S19. Forms two bridges to the 50S subunit in the 70S ribosome.

Located at the top of the head of the 30S subunit, it contacts several helices of the 16S rRNA. In the 70S ribosome it contacts the 23S rRNA (bridge B1a) and protein L5 of the 50S subunit (bridge B1b), connecting the 2 subunits; these bridges are implicated in subunit movement. Contacts the tRNAs in the A and P-sites. The protein is Small ribosomal subunit protein uS13 of Porphyromonas gingivalis (strain ATCC 33277 / DSM 20709 / CIP 103683 / JCM 12257 / NCTC 11834 / 2561).